Here is a 435-residue protein sequence, read N- to C-terminus: Succinate--CoA ligase [ADP-forming] subunit beta, mitochondrial (435 aa).

A mitochondrion-targeting transit peptide spans 1–20 (MIGRISQPLLNTSQKFMAPA). Residues 32–259 (MKILQNYEIK…SNAEFRQAKL (228 aa)) enclose the ATP-grasp domain. Residues Lys69 and 76–78 (GRG) contribute to the ATP site. Positions 229 and 243 each coordinate Mg(2+). Residues Asn294 and 352-354 (GIM) each bind substrate.

Belongs to the succinate/malate CoA ligase beta subunit family. ATP-specific subunit beta subfamily. In terms of assembly, heterodimer of an alpha and a beta subunit. The beta subunit determines specificity for ATP. The cofactor is Mg(2+).

The protein localises to the mitochondrion. It catalyses the reaction succinate + ATP + CoA = succinyl-CoA + ADP + phosphate. Its pathway is carbohydrate metabolism; tricarboxylic acid cycle; succinate from succinyl-CoA (ligase route): step 1/1. Functionally, ATP-specific succinyl-CoA synthetase functions in the citric acid cycle (TCA), coupling the hydrolysis of succinyl-CoA to the synthesis of ATP and thus represents the only step of substrate-level phosphorylation in the TCA. The beta subunit provides nucleotide specificity of the enzyme and binds the substrate succinate, while the binding sites for coenzyme A and phosphate are found in the alpha subunit. The chain is Succinate--CoA ligase [ADP-forming] subunit beta, mitochondrial from Caenorhabditis elegans.